The following is a 64-amino-acid chain: MSGREGGKKKPLKQPKKQAKEMDEEDKAFKQKQKEEQKKLEELKAKAAGKGPLATGGIKKSGKK.

The interval 1–64 (MSGREGGKKK…TGGIKKSGKK (64 aa)) is disordered. Residues 21–50 (EMDEEDKAFKQKQKEEQKKLEELKAKAAGK) are a coiled coil. The span at 27–45 (KAFKQKQKEEQKKLEELKA) shows a compositional bias: basic and acidic residues. Ser-61 bears the ADP-ribosylserine mark.

Belongs to the TMA7 family.

This chain is Translation machinery-associated protein 7 (TMA7), found in Bos taurus (Bovine).